Consider the following 262-residue polypeptide: 14-3-3-like protein B (262 aa).

This sequence belongs to the 14-3-3 family.

The sequence is that of 14-3-3-like protein B from Hordeum vulgare (Barley).